Here is a 347-residue protein sequence, read N- to C-terminus: Ubiquinone biosynthesis protein coq-4, mitochondrial (347 aa).

Residues 1–49 constitute a mitochondrion transit peptide; sequence MEVTALRRSAALVARASSQNAIRPAVCAAISSTSPTPPTQIQTQQTRQF. Zn(2+)-binding residues include histidine 185, aspartate 186, histidine 189, and glutamate 201. The interval 284–310 is disordered; that stretch reads IRKREREEKRRRKEMERMLSGRGTEDV.

It belongs to the COQ4 family. Component of a multi-subunit COQ enzyme complex, composed of at least coq-3, coq-4, coq-5, coq-6, coq-7 and coq-9. It depends on Zn(2+) as a cofactor.

It is found in the mitochondrion inner membrane. The enzyme catalyses a 4-hydroxy-3-methoxy-5-(all-trans-polyprenyl)benzoate + H(+) = a 2-methoxy-6-(all-trans-polyprenyl)phenol + CO2. The protein operates within cofactor biosynthesis; ubiquinone biosynthesis. Its function is as follows. Lyase that catalyzes the C1-decarboxylation of 4-hydroxy-3-methoxy-5-(all-trans-polyprenyl)benzoic acid into 2-methoxy-6-(all-trans-polyprenyl)phenol during ubiquinone biosynthesis. The protein is Ubiquinone biosynthesis protein coq-4, mitochondrial of Neurospora crassa (strain ATCC 24698 / 74-OR23-1A / CBS 708.71 / DSM 1257 / FGSC 987).